The following is a 779-amino-acid chain: LPS-assembly protein LptD (779 aa).

The signal sequence occupies residues Met1 to Ala23.

It belongs to the LptD family. Component of the lipopolysaccharide transport and assembly complex. Interacts with LptE and LptA.

It is found in the cell outer membrane. In terms of biological role, together with LptE, is involved in the assembly of lipopolysaccharide (LPS) at the surface of the outer membrane. The sequence is that of LPS-assembly protein LptD from Haemophilus ducreyi (strain 35000HP / ATCC 700724).